The chain runs to 511 residues: 2-methylbutanal oxime monooxygenase (511 aa).

Transmembrane regions (helical) follow at residues 10 to 30 (PPQWLSILAVFLLPILTLLLF) and 304 to 324 (ILMNVFVGGIDTSAVTITWAF). Cys451 contacts heme.

The protein belongs to the cytochrome P450 family. Heme serves as cofactor. Expressed in storage roots, primary roots, petioles and vascular tissues. Expressed in the outer cortex cells, the endodermis and around the xylem, phloem cells and laticifers.

It localises to the microsome membrane. The enzyme catalyses (1E,2S)-2-methylbutanal oxime + reduced [NADPH--hemoprotein reductase] + O2 = 2-hydroxy-2-methylbutanenitrile + oxidized [NADPH--hemoprotein reductase] + 2 H2O + H(+). It carries out the reaction (E)-2-methylpropanal oxime + reduced [NADPH--hemoprotein reductase] + O2 = 2-hydroxy-2-methylpropanenitrile + oxidized [NADPH--hemoprotein reductase] + 2 H2O + H(+). In terms of biological role, catalyzes the conversion of (E)-2-methylpropanal oxime (valox) to 2-hydroxy-2-methylpropanenitrile (acetone cyanohydrin) and of (E)-2-methylbutanal oxime (ilox) to 2-hydroxy-2-methylbutyronitrile. The reaction takes place in three steps. First, the oxime is isomerized to the (Z)- isomer, next the (Z)-isomer is dehydrated to the corresponding nitrile, followed by a C-hydroxylation of the nitrile. Can use both aliphatic and aromatic oximes as substrates. This Manihot esculenta (Cassava) protein is 2-methylbutanal oxime monooxygenase (CYP71E7).